Here is a 345-residue protein sequence, read N- to C-terminus: N-acetyl-gamma-glutamyl-phosphate reductase (345 aa).

The active site involves cysteine 149.

Belongs to the NAGSA dehydrogenase family. Type 1 subfamily.

Its subcellular location is the cytoplasm. It carries out the reaction N-acetyl-L-glutamate 5-semialdehyde + phosphate + NADP(+) = N-acetyl-L-glutamyl 5-phosphate + NADPH + H(+). It participates in amino-acid biosynthesis; L-arginine biosynthesis; N(2)-acetyl-L-ornithine from L-glutamate: step 3/4. Its function is as follows. Catalyzes the NADPH-dependent reduction of N-acetyl-5-glutamyl phosphate to yield N-acetyl-L-glutamate 5-semialdehyde. The protein is N-acetyl-gamma-glutamyl-phosphate reductase of Bacillus thuringiensis subsp. konkukian (strain 97-27).